Consider the following 309-residue polypeptide: Ribonuclease Z (309 aa).

The Zn(2+) site is built by H63, H65, D67, H68, H141, D212, and H270. The active-site Proton acceptor is the D67.

Belongs to the RNase Z family. Homodimer. It depends on Zn(2+) as a cofactor.

The enzyme catalyses Endonucleolytic cleavage of RNA, removing extra 3' nucleotides from tRNA precursor, generating 3' termini of tRNAs. A 3'-hydroxy group is left at the tRNA terminus and a 5'-phosphoryl group is left at the trailer molecule.. Functionally, zinc phosphodiesterase, which displays some tRNA 3'-processing endonuclease activity. Probably involved in tRNA maturation, by removing a 3'-trailer from precursor tRNA. The chain is Ribonuclease Z from Halalkalibacterium halodurans (strain ATCC BAA-125 / DSM 18197 / FERM 7344 / JCM 9153 / C-125) (Bacillus halodurans).